The chain runs to 494 residues: MGSTSSLYAAIDLGSNSFHMLVVREVAGSIQTLTRIKRKVRLAAGLNSENALSNEAMERGWQCLRLFAERLQDIPPSQIRVVATATLRLAVNAGDFIAKAQEILGCPVQVISGEEEARLIYQGVAHTTGGADQRLVVDIGGASTELVTGTGAQTTSLFSLSMGCVTWLERYFADRNLGQENFDAAEKAAREVLRPIADELRYHGWKVCVGASGTVQALQEIMMAQGMDERITLEKLQQLKQRAIHCGRLEELEIDGLTLERALVFPSGLAILIAIFTELNIQYMTLAGGALREGLVYGMLHLAVEQDIRSRTLRNIQRRFMIDIDQAQRVAKVAANFFDQVENEWHLEAISRDLLISACQLHEIGLSVDFKQAPQHAAYLVRNLDLPGFTPAQKKLLATLLLNQTNPVDLSSLHQQNAVPPRVAEQLCRLLRLAIIFASRRRDDLVPEMTLQANHELLTLTLPQGWLTQHPLGKEIIAQESQWQSYVHWPLEVH.

It belongs to the GppA/Ppx family. GppA subfamily.

The enzyme catalyses guanosine 3'-diphosphate 5'-triphosphate + H2O = guanosine 3',5'-bis(diphosphate) + phosphate + H(+). It functions in the pathway purine metabolism; ppGpp biosynthesis; ppGpp from GTP: step 2/2. In terms of biological role, catalyzes the conversion of pppGpp to ppGpp. Guanosine pentaphosphate (pppGpp) is a cytoplasmic signaling molecule which together with ppGpp controls the 'stringent response', an adaptive process that allows bacteria to respond to amino acid starvation, resulting in the coordinated regulation of numerous cellular activities. This is Guanosine-5'-triphosphate,3'-diphosphate pyrophosphatase from Shigella dysenteriae serotype 1 (strain Sd197).